We begin with the raw amino-acid sequence, 267 residues long: Serine acetyltransferase (267 aa).

This sequence belongs to the transferase hexapeptide repeat family.

It is found in the cytoplasm. It carries out the reaction L-serine + acetyl-CoA = O-acetyl-L-serine + CoA. The protein operates within amino-acid biosynthesis; L-cysteine biosynthesis; L-cysteine from L-serine: step 1/2. This is Serine acetyltransferase (cysE) from Haemophilus influenzae (strain ATCC 51907 / DSM 11121 / KW20 / Rd).